We begin with the raw amino-acid sequence, 274 residues long: 4-deoxy-L-threo-5-hexosulose-uronate ketol-isomerase (274 aa).

Residues H192, H194, E199, and H241 each coordinate Zn(2+).

This sequence belongs to the KduI family. The cofactor is Zn(2+).

The enzyme catalyses 5-dehydro-4-deoxy-D-glucuronate = 3-deoxy-D-glycero-2,5-hexodiulosonate. It participates in glycan metabolism; pectin degradation; 2-dehydro-3-deoxy-D-gluconate from pectin: step 4/5. Catalyzes the isomerization of 5-dehydro-4-deoxy-D-glucuronate to 3-deoxy-D-glycero-2,5-hexodiulosonate. This Cereibacter sphaeroides (strain ATCC 17025 / ATH 2.4.3) (Rhodobacter sphaeroides) protein is 4-deoxy-L-threo-5-hexosulose-uronate ketol-isomerase.